A 425-amino-acid polypeptide reads, in one-letter code: Dipeptidase tcpJ (425 aa).

Positions 46, 48, and 158 each coordinate Zn(2+). Substrate-binding residues include His-185, Arg-259, and Asp-318.

Belongs to the metallo-dependent hydrolases superfamily. Peptidase M19 family. Zn(2+) serves as cofactor.

The catalysed reaction is an L-aminoacyl-L-amino acid + H2O = 2 an L-alpha-amino acid. Its function is as follows. Dipeptidase; part of the gene cluster that mediates the biosynthesis of an unusual class of epipolythiodioxopiperazines (ETPs) lacking the reactive thiol group important for toxicity. Firstly, L-tyrosine is prenylated by tcpD, before undergoing condensation with L-glycine in a reaction catalyzed by the NRPS tcpP leading to the diketopiperazine (DKP) backbone. Afterwards the alpha-carbon of tyrosine is oxidized by the cytochrome P450 tcpC to form a hydroxyl group. However, in contrast other ETP biosynthesis pathways studied so far, tcpC is not able to bishydroxylate the DKP at both alpha-carbon positions, but hydroxylates the alpha-carbon of the tyrosine part and the nitrogen of the glycine part. The next steps involve an alpha,beta-elimination reaction catalyzed by tcpI, a methylation by the methyltransferase tcpN the action of the four enzyme cascade tcpG/K/J/I. Due to a dysfunctional cytochrome P450 monooxygenase tcpC, the pathway leads to the biosynthesis of probable non-toxic metabolites lacking the reactive thiol group. The chain is Dipeptidase tcpJ from Claviceps purpurea (strain 20.1) (Ergot fungus).